The chain runs to 309 residues: MSKIVVALGGNALGQSPKEQLDLLKSTSKSLVSLIDKGYEIVISHGNGPQVGSINLGLNYAAEHKQGPPFPFPECGAMSQAYIGYQMQESLQNELHSMGIDKQVVTLVTQVQVASDDSAFNNPTKPIGLFYTKEQADKFTKEKGYTFVEDSGRGYRRVVPSPQPISIVELDSIETLITHGTLVIAAGGGGIPVIKENEVYTGVDAVIDKDKTSALLAAHLQSDQLIILTAVDHVYINYGKENQRGLDEVSVDEMKKHISDGQFAKGSMLPKVEAALQFLEKNTKGSVLITSLAGLGDALDGKIGTLIKN.

It belongs to the carbamate kinase family.

It is found in the cytoplasm. The catalysed reaction is hydrogencarbonate + NH4(+) + ATP = carbamoyl phosphate + ADP + H2O + H(+). It participates in metabolic intermediate metabolism; carbamoyl phosphate degradation; CO(2) and NH(3) from carbamoyl phosphate: step 1/1. The polypeptide is Carbamate kinase 3 (arcC3) (Staphylococcus aureus (strain USA300)).